We begin with the raw amino-acid sequence, 568 residues long: Estrogen receptor beta-1 (568 aa).

Residues 12 to 169 (SEYAEGDSSL…SLRGKADMHY (158 aa)) are modulating. NR C4-type zinc fingers lie at residues 170–190 (CAVC…CEGC) and 206–230 (CPAT…LRKC). The nuclear receptor DNA-binding region spans 170 to 235 (CAVCSDYASG…RLRKCYEVGM (66 aa)). The NR LBD domain occupies 292 to 528 (SPEELIARIM…DLLLEMLDAH (237 aa)).

This sequence belongs to the nuclear hormone receptor family. NR3 subfamily. As to quaternary structure, binds DNA as a homodimer. Can form a heterodimer with ER-alpha.

The protein resides in the nucleus. Functionally, binds estrogens with an affinity similar to that of ER-alpha, and activates expression of reporter genes containing estrogen response elements (ERE) in an estrogen-dependent manner. The chain is Estrogen receptor beta-1 (esr2a) from Carassius auratus (Goldfish).